The primary structure comprises 393 residues: MKAELIAVGTEILTGQIINTNAQFLSEKCAELGIDVYFHTAVGDNEGRLLSTLEVASKRSNMVVLCGGLGPTEDDLTKQTLATFLGRNLVFDELAMAKLDRFFASRPGRVRTPNNERQAQIVEGSQALQNPAGLAVGGMIEQDGVTYIVLPGPPSELKAMFSESLLPLLSQSQQQLYSRVLRFFGIGESQLVTVLADVIDKQTDPTLAPYAKVGEVTLRLSTKATSQEEANLRLNQLEEDILQHDKLADYFYAYGEDNSLVKTVATRLAEKRQTIAIVEQGTGGLLQAELSLALADQPYFSGGKVVGQLGIESGWLSEEADCIRQELQADLGLAVSVLIKPESTEDNVLAKVYLTLATPSGISQKEIDLRGYSWQYLRQLACLQAWDFVRNTL.

Belongs to the CinA family.

This is Putative competence-damage inducible protein from Streptococcus suis (strain 05ZYH33).